Here is a 668-residue protein sequence, read N- to C-terminus: MKKLRYVHLNLLLLLLPLINLQFPTLSLAQDYDEPKKDDTPPPGLARCNGVYMSYSSGGREKLYPRTTNATAQAWSFKSTAMIVNTGIEEVKGWQMFVGFHHREIIVSATGAVSSDGDFPVDATNGTTFIGSQNTDLKTSILTAGDYTQISTNIEITGTVFGGKGTATPMPKSIKLTNDGWQCPAATSKGGTMQVCCKRNPKFKAKEKVKTKFMPRQHGDLNIIYDVLQAYASSYMAQVTIDNTSPLGRLDHWNLTWEWMRGEFIHSMRGAYAAEKNTLECLSSKAGQFYGDLDFSQVANCQKKPIIKDLPAERKDDNVTGKLPFCCKNGTLLPTHMDPSKSKAIFQLQVYKVPPDQNRTAFFPPRNWKIDGIVNPTYKCGPPIRVDATPFPDPSGLQATTYAIASWQVICNITKPKPQAARCCVSFSAFYNDSAIPCNTCACGCKDIDTDTCNANARQLLLPTDTLLVPFDNRTLKAKVWAKQKHMAYPKKLPCPDNCGISLNWHLNSDYGNGWSARVTLFNWGNNAVEDWFGALDLGKAGLGYENIYSFNGSRVPPKNQTIFFQGLPGMNYLIGITNGTNPARDPQIPGKMQSVISFKKKNLGSLNIIGGDGFPKRVFFNGEECELPKYFPKKSSGMRLSGIRFLPSILLAITTFHAITDRLLTGV.

Positions 1–29 are cleaved as a signal peptide; that stretch reads MKKLRYVHLNLLLLLLPLINLQFPTLSLA. N-linked (GlcNAc...) asparagine glycans are attached at residues asparagine 69, asparagine 125, asparagine 254, asparagine 318, asparagine 329, asparagine 358, asparagine 412, asparagine 432, asparagine 473, asparagine 552, asparagine 560, and asparagine 579. Residue serine 636 is the site of GPI-anchor amidated serine attachment. Residues 637–668 constitute a propeptide, removed in mature form; sequence SGMRLSGIRFLPSILLAITTFHAITDRLLTGV.

This sequence belongs to the COBRA family. As to expression, mostly expressed in flowers, stamen, anthers and pollen, and, to a lower extent, possibly in roots, stems, leaves and siliques.

The protein localises to the cell membrane. Involved in the deposition of apical pectin cap and cellulose microfibrils in pollen tubes. Implicated in pollen tubes growth in the female transmitting tract of pistil and toward micropyles, via the perception of ovule guidance cues. The protein is COBRA-like protein 11 of Arabidopsis thaliana (Mouse-ear cress).